A 260-amino-acid polypeptide reads, in one-letter code: HMP-PP phosphatase (260 aa).

D8 functions as the Nucleophile in the catalytic mechanism. Residues D8, D10, and D212 each contribute to the Mg(2+) site.

Belongs to the HAD-like hydrolase superfamily. Cof family. Mg(2+) serves as cofactor.

The enzyme catalyses 4-amino-2-methyl-5-(diphosphooxymethyl)pyrimidine + H2O = 4-amino-2-methyl-5-(phosphooxymethyl)pyrimidine + phosphate + H(+). Its function is as follows. Catalyzes the hydrolysis of 4-amino-2-methyl-5-hydroxymethylpyrimidine pyrophosphate (HMP-PP) to 4-amino-2-methyl-5-hydroxymethylpyrimidine phosphate (HMP-P). In Shigella boydii serotype 4 (strain Sb227), this protein is HMP-PP phosphatase.